Reading from the N-terminus, the 214-residue chain is Small ribosomal subunit protein uS2 (214 aa).

It belongs to the universal ribosomal protein uS2 family.

The chain is Small ribosomal subunit protein uS2 from Thermofilum pendens (strain DSM 2475 / Hrk 5).